The chain runs to 671 residues: Nucleolar GTP-binding protein 1 (671 aa).

In terms of domain architecture, OBG-type G spans 169-350; that stretch reads RTVLICGYPN…VKNAACERLL (182 aa). GTP contacts are provided by residues 175 to 182, 221 to 225, and 289 to 292; these read GYPNVGKS, DTPGI, and NKTD. The segment at 516–671 is disordered; that stretch reads VAQNRSTVPR…KRGKGKTDRR (156 aa). Over residues 595–605 the composition is skewed to polar residues; it reads RAMSISRSQSR. 2 stretches are compositionally biased toward basic residues: residues 631–640 and 654–671; these read NKSHKKRDKN and RPKHLFSGKRGKGKTDRR.

The protein belongs to the TRAFAC class OBG-HflX-like GTPase superfamily. OBG GTPase family. NOG subfamily.

It is found in the nucleus. Its subcellular location is the nucleolus. Its function is as follows. Involved in the biogenesis of the 60S ribosomal subunit. The protein is Nucleolar GTP-binding protein 1 of Arabidopsis thaliana (Mouse-ear cress).